The sequence spans 712 residues: Aryl hydrocarbon receptor nuclear translocator 2 (712 aa).

Disordered stretches follow at residues 1–20 (MATP…PGSV) and 35–74 (MAGA…IERR). At Arg-42 the chain carries Omega-N-methylarginine. Residues 63 to 73 (FSRENHSEIER) are compositionally biased toward basic and acidic residues. Residues 63-116 (FSRENHSEIERRRRNKMTQYITELSDMVPTCSALARKPDKLTILRMAVSHMKSM) enclose the bHLH domain. 2 consecutive PAS domains span residues 134–209 (TEQE…MTGR) and 323–393 (PVCM…VKLK). Residues 398-441 (SVMYRFRTKNREWLLIRTSSFTFQNPYSDEIEYVICTNTNVKQL) form the PAC domain. Positions 573–712 (AWTGSRPPFP…DLGMFPPFSE (140 aa)) are disordered. 2 stretches are compositionally biased toward low complexity: residues 597–626 (SSHP…AYPS) and 653–675 (SQWQ…QPGQ).

Efficient DNA binding requires dimerization with another bHLH protein. Heterodimer with NPAS4 or SIM1. Heterodimer with the aryl hydrocarbon receptor (AHR) or the SIM1 protein. Interacts with TACC3.

The protein resides in the nucleus. Transcription factor that plays a role in the development of the hypothalamo-pituitary axis, postnatal brain growth, and visual and renal function. Specifically recognizes the xenobiotic response element (XRE). The protein is Aryl hydrocarbon receptor nuclear translocator 2 (Arnt2) of Rattus norvegicus (Rat).